A 418-amino-acid polypeptide reads, in one-letter code: 3-isopropylmalate dehydratase large subunit (418 aa).

Cys299, Cys359, and Cys362 together coordinate [4Fe-4S] cluster.

It belongs to the aconitase/IPM isomerase family. LeuC type 2 subfamily. Heterodimer of LeuC and LeuD. It depends on [4Fe-4S] cluster as a cofactor.

The enzyme catalyses (2R,3S)-3-isopropylmalate = (2S)-2-isopropylmalate. It functions in the pathway amino-acid biosynthesis; L-leucine biosynthesis; L-leucine from 3-methyl-2-oxobutanoate: step 2/4. In terms of biological role, catalyzes the isomerization between 2-isopropylmalate and 3-isopropylmalate, via the formation of 2-isopropylmaleate. In Nitratidesulfovibrio vulgaris (strain DSM 19637 / Miyazaki F) (Desulfovibrio vulgaris), this protein is 3-isopropylmalate dehydratase large subunit.